The chain runs to 93 residues: Insertion element ISR1 uncharacterized 11 kDa protein A1 (93 aa).

Disordered stretches follow at residues 14–33 (RRARTTRSARPAEGPGQERR) and 68–93 (RRRAPQASDGHAATVTCRWRPTSAGR).

This chain is Insertion element ISR1 uncharacterized 11 kDa protein A1, found in Rhizobium sp.